Reading from the N-terminus, the 230-residue chain is Phosphatidate cytidylyltransferase (230 aa).

A run of 6 helical transmembrane segments spans residues 33–53 (FVIA…LVGT), 67–87 (IPDL…LIFL), 95–115 (WLIM…MIGG), 133–153 (WSGL…VSFI), 167–187 (IYLF…DLFI), and 206–226 (HGGV…LFLM).

The protein belongs to the CDS family.

Its subcellular location is the cell membrane. The enzyme catalyses a 1,2-diacyl-sn-glycero-3-phosphate + CTP + H(+) = a CDP-1,2-diacyl-sn-glycerol + diphosphate. The protein operates within phospholipid metabolism; CDP-diacylglycerol biosynthesis; CDP-diacylglycerol from sn-glycerol 3-phosphate: step 3/3. The chain is Phosphatidate cytidylyltransferase (cdsA) from Rickettsia conorii (strain ATCC VR-613 / Malish 7).